A 209-amino-acid polypeptide reads, in one-letter code: Lectin (209 aa).

Homodimer; non-covalently linked.

In terms of biological role, binds chito-oligosaccherides. Has hemagglutinating activity towards rabbit erythrocytes. The protein is Lectin of Luffa acutangula (Ridged gourd).